Here is a 344-residue protein sequence, read N- to C-terminus: Serpentine receptor class alpha-27 (344 aa).

Transmembrane regions (helical) follow at residues 28 to 48, 67 to 87, 128 to 148, 157 to 177, 203 to 223, 252 to 272, and 287 to 307; these read SIWM…TFYL, QILL…FLEI, GLLS…TVYV, MLIT…YGGV, AIFW…LLNI, ICSV…ALAI, and INIQ…VLIY.

The protein belongs to the nematode receptor-like protein sra family.

It is found in the membrane. The chain is Serpentine receptor class alpha-27 (sra-27) from Caenorhabditis elegans.